We begin with the raw amino-acid sequence, 145 residues long: Protein cornichon homolog 1 (145 aa).

3 helical membrane passes run 5-25 (FAAF…FFAI), 57-77 (IIHG…SILA), and 116-136 (LRIS…YLYA).

This sequence belongs to the cornichon family. As to quaternary structure, interacts with glr-1. As to expression, widely expressed in the nervous system including in the AVA interneurons.

The protein resides in the endoplasmic reticulum membrane. Its subcellular location is the synapse. It localises to the cell projection. The protein localises to the dendrite. Negatively regulates export of glr-1 from the endoplasmic reticulum to synapses. In Caenorhabditis elegans, this protein is Protein cornichon homolog 1.